The primary structure comprises 369 residues: 3-dehydroquinate synthase (369 aa).

Residues 75–80 (DGEEHK), 109–113 (GVIGD), 133–134 (TT), K146, K155, and 173–176 (TLKT) each bind NAD(+). Zn(2+)-binding residues include E188, H251, and H268.

This sequence belongs to the sugar phosphate cyclases superfamily. Dehydroquinate synthase family. It depends on Co(2+) as a cofactor. Zn(2+) is required as a cofactor. The cofactor is NAD(+).

It localises to the cytoplasm. The enzyme catalyses 7-phospho-2-dehydro-3-deoxy-D-arabino-heptonate = 3-dehydroquinate + phosphate. The protein operates within metabolic intermediate biosynthesis; chorismate biosynthesis; chorismate from D-erythrose 4-phosphate and phosphoenolpyruvate: step 2/7. Its function is as follows. Catalyzes the conversion of 3-deoxy-D-arabino-heptulosonate 7-phosphate (DAHP) to dehydroquinate (DHQ). The protein is 3-dehydroquinate synthase of Legionella pneumophila (strain Lens).